The sequence spans 123 residues: SGSCTTKTCWTTLPKFREIGYILKEKYNAAVQVEVVRASRLRQPTFLKIKQIKSYQKPMETDLVYIEKSPNYCEEDASTGSVGTQGRLCNRTSPNADGCDMMCCGRGYNTHQYTKVWQCNCKF.

Ser-1 carries O-palmitoleoyl serine; by PORCN lipidation. The segment at 33-61 (VEVVRASRLRQPTFLKIKQIKSYQKPMET) is disordered linker. The cysteines at positions 89 and 104 are disulfide-linked. Asn-90 carries an N-linked (GlcNAc...) asparagine glycan.

Belongs to the Wnt family. In terms of processing, palmitoleoylation is required for efficient binding to frizzled receptors. Depalmitoleoylation leads to Wnt signaling pathway inhibition.

Its subcellular location is the secreted. It is found in the extracellular space. The protein resides in the extracellular matrix. Ligand for members of the frizzled family of seven transmembrane receptors that functions in the canonical Wnt/beta-catenin signaling pathway. Required for normal fusion of the chorion and the allantois during placenta development. Required for central nervous system (CNS) angiogenesis and blood-brain barrier regulation. The protein is Protein Wnt-7b (WNT7B) of Anser caerulescens (Snow goose).